The following is a 364-amino-acid chain: UDP-3-O-acylglucosamine N-acyltransferase (364 aa).

His-267 functions as the Proton acceptor in the catalytic mechanism.

It belongs to the transferase hexapeptide repeat family. LpxD subfamily. As to quaternary structure, homotrimer.

The catalysed reaction is a UDP-3-O-[(3R)-3-hydroxyacyl]-alpha-D-glucosamine + a (3R)-hydroxyacyl-[ACP] = a UDP-2-N,3-O-bis[(3R)-3-hydroxyacyl]-alpha-D-glucosamine + holo-[ACP] + H(+). The protein operates within bacterial outer membrane biogenesis; LPS lipid A biosynthesis. Its function is as follows. Catalyzes the N-acylation of UDP-3-O-acylglucosamine using 3-hydroxyacyl-ACP as the acyl donor. Is involved in the biosynthesis of lipid A, a phosphorylated glycolipid that anchors the lipopolysaccharide to the outer membrane of the cell. The protein is UDP-3-O-acylglucosamine N-acyltransferase of Bordetella petrii (strain ATCC BAA-461 / DSM 12804 / CCUG 43448).